A 47-amino-acid chain; its full sequence is Large ribosomal subunit protein bL34 (47 aa).

It belongs to the bacterial ribosomal protein bL34 family.

This is Large ribosomal subunit protein bL34 (rpmH) from Mycolicibacterium smegmatis (strain ATCC 700084 / mc(2)155) (Mycobacterium smegmatis).